The primary structure comprises 598 residues: MMENNRNYFIAIALSVLIVLGWQFLYMNPRIEAQRKAQEAQKAQQQTEQVQQPAAGGQTPAQTSGAAPSGQAAATATLEQALQKSPRVVIDTPALSGSINLAGARLDDLKLKGYHETVDDSSPIITLFSPAETKDGYFTELGYIGSDATGSVPGPSTLWTAPEGAKLTEKTPVTLSYTNDKGLTFTRTISVDERYMFTVADKIENTGQAPAALSSYGRVTRYNKPTTPSVYVLHEGFIGVIGDDGLIETKYSAVEKEAVAPAKSTGGWLGITDKYWAATIVPPQSAAYEAHFSYFADGQPRYQADYKDDAFTVAPGQSIELKNLVFAGAKEVPVIDGYEASYSIPKFDRLIDWGWFYFITKPMFKLMDFFFRYFGNFGVAILCTTIVVKALFFPLASKQYASMANMKRMQPKMEELKAKFADDRMGLQQATMQLYKEEKINPIAGCWPVALQIPIFFSLYKVIYITIEMRHAPFFGWIKDLSAPDPTTIVNLFGLLPFEGPTLLHLGVWPLIMGVTMFVQMRMNPTPPDPTQAMIFNWMPLVFMFMLASFPAGLVIYWAWNNTLSVAQQGLIMKRHGVKVELFDNLKGLFRRKEAPSK.

A helical membrane pass occupies residues 7–27 (NYFIAIALSVLIVLGWQFLYM). The interval 37–76 (AQEAQKAQQQTEQVQQPAAGGQTPAQTSGAAPSGQAAATA) is disordered. The segment covering 40 to 76 (AQKAQQQTEQVQQPAAGGQTPAQTSGAAPSGQAAATA) has biased composition (low complexity). 4 helical membrane passes run 377–397 (FGVAILCTTIVVKALFFPLAS), 447–467 (WPVALQIPIFFSLYKVIYITI), 492–512 (LFGLLPFEGPTLLHLGVWPLI), and 538–558 (WMPLVFMFMLASFPAGLVIYW).

The protein belongs to the OXA1/ALB3/YidC family. Type 1 subfamily. In terms of assembly, interacts with the Sec translocase complex via SecD. Specifically interacts with transmembrane segments of nascent integral membrane proteins during membrane integration.

The protein localises to the cell inner membrane. Required for the insertion and/or proper folding and/or complex formation of integral membrane proteins into the membrane. Involved in integration of membrane proteins that insert both dependently and independently of the Sec translocase complex, as well as at least some lipoproteins. Aids folding of multispanning membrane proteins. The sequence is that of Membrane protein insertase YidC from Rhizobium johnstonii (strain DSM 114642 / LMG 32736 / 3841) (Rhizobium leguminosarum bv. viciae).